The sequence spans 276 residues: Diaminopimelate epimerase (276 aa).

Positions 13, 46, and 66 each coordinate substrate. Catalysis depends on C75, which acts as the Proton donor. Residues 76–77, N159, N192, and 210–211 each bind substrate; these read GN and ER. The active-site Proton acceptor is the C219. Position 220-221 (220-221) interacts with substrate; it reads GS.

The protein belongs to the diaminopimelate epimerase family. As to quaternary structure, homodimer.

It localises to the cytoplasm. The enzyme catalyses (2S,6S)-2,6-diaminopimelate = meso-2,6-diaminopimelate. It participates in amino-acid biosynthesis; L-lysine biosynthesis via DAP pathway; DL-2,6-diaminopimelate from LL-2,6-diaminopimelate: step 1/1. Its function is as follows. Catalyzes the stereoinversion of LL-2,6-diaminopimelate (L,L-DAP) to meso-diaminopimelate (meso-DAP), a precursor of L-lysine and an essential component of the bacterial peptidoglycan. This chain is Diaminopimelate epimerase, found in Vibrio campbellii (strain ATCC BAA-1116).